A 227-amino-acid chain; its full sequence is Isopentenyl-diphosphate delta-isomerase 2 (227 aa).

Lys36 provides a ligand contact to substrate. Residues His40 and His51 each coordinate Mg(2+). The region spanning 49–199 (LLHRAFSVVL…EVKVTPWLRT (151 aa)) is the Nudix hydrolase domain. Substrate-binding residues include Arg70 and Lys74. Ser86 is an active-site residue. Ser87 contributes to the substrate binding site. Mg(2+) is bound by residues Glu146 and Glu148. Glu148 is an active-site residue. The Microbody targeting signal motif lies at 225–227 (HRV).

It belongs to the IPP isomerase type 1 family. Mg(2+) is required as a cofactor. As to expression, muscle-specific expression.

It is found in the peroxisome. It carries out the reaction isopentenyl diphosphate = dimethylallyl diphosphate. Its pathway is isoprenoid biosynthesis; dimethylallyl diphosphate biosynthesis; dimethylallyl diphosphate from isopentenyl diphosphate: step 1/1. In terms of biological role, catalyzes the 1,3-allylic rearrangement of the homoallylic substrate isopentenyl (IPP) to its highly electrophilic allylic isomer, dimethylallyl diphosphate (DMAPP). The chain is Isopentenyl-diphosphate delta-isomerase 2 (IDI2) from Homo sapiens (Human).